Here is a 377-residue protein sequence, read N- to C-terminus: Guanine nucleotide-binding protein subunit beta (377 aa).

7 WD repeats span residues 63–93 (GHTG…IVWN), 105–135 (LPCA…SIFN), 154–185 (GHKG…VLWD), 202–233 (GHTA…RLWD), 246–276 (CHEG…RLFD), 293–323 (GDIP…YVWD), and 339–369 (SHEG…KIWA).

This sequence belongs to the WD repeat G protein beta family. G proteins are composed of 3 units, alpha, beta and gamma.

The protein localises to the cell membrane. Its subcellular location is the endoplasmic reticulum membrane. Guanine nucleotide-binding proteins (G proteins) are involved as a modulator or transducer in various transmembrane signaling systems. The beta and gamma chains are required for the GTPase activity, for replacement of GDP by GTP, and for G protein-effector interaction. In Nicotiana plumbaginifolia (Leadwort-leaved tobacco), this protein is Guanine nucleotide-binding protein subunit beta.